We begin with the raw amino-acid sequence, 214 residues long: Lazarillo protein (214 aa).

The signal sequence occupies residues M1–S21. N-linked (GlcNAc...) asparagine glycans are attached at residues N38, N74, N84, N90, N130, N158, and N161. A192 carries GPI-anchor amidated alanine lipidation. The propeptide at G193–H214 is removed in mature form.

This sequence belongs to the calycin superfamily. Lipocalin family. N-glycosylated. In terms of processing, contains disulfide bonds. As to expression, expressed by a subset of neuroblasts, ganglion mother cells and neurons of the CNS; by all sensory neurons of the PNS.

Its subcellular location is the cell membrane. Putative role in axonal outgrowth and guidance, required for the navigation of identified commissural neurons. Could be a receptor the midline morphogen. The polypeptide is Lazarillo protein (Schistocerca americana (American grasshopper)).